Reading from the N-terminus, the 75-residue chain is Large ribosomal subunit protein uL29 (75 aa).

It belongs to the universal ribosomal protein uL29 family.

The protein is Large ribosomal subunit protein uL29 of Pyrobaculum aerophilum (strain ATCC 51768 / DSM 7523 / JCM 9630 / CIP 104966 / NBRC 100827 / IM2).